Here is a 1117-residue protein sequence, read N- to C-terminus: ATP-dependent RNA helicase mtr4 (1117 aa).

The tract at residues 19-86 (KSLKEESKNS…DNQDLIPNND (68 aa)) is disordered. Positions 65–79 (SATKRAKIENLKDNQ) are enriched in basic and acidic residues. The 157-residue stretch at 207–363 (IACIERQESV…WITKIHRQPC (157 aa)) folds into the Helicase ATP-binding domain. 220–227 (AHTSAGKT) serves as a coordination point for ATP. Residues 311–314 (DEIH) carry the DEIH box motif. The disordered stretch occupies residues 414–433 (GDDPAAMATKGNAKKGKTGK). The Helicase C-terminal domain occupies 441 to 642 (DIYKIVKMIM…LSYNMILNLL (202 aa)).

It belongs to the helicase family. SKI2 subfamily. In terms of assembly, component of the TRAMP complex composed of at least cid14, mtr4, and air1.

It localises to the nucleus. Functionally, component of the TRAMP complex which has a poly(A) RNA polymerase activity and is involved in a post-transcriptional quality control mechanism limiting inappropriate expression of genetic information. Polyadenylation is required for the degradative activity of the exosome on several of its nuclear RNA substrates. Required for heterochromatic gene silencing at centromeric repeats by either exosome- or RNAi-mediated degradation of heterochromatic transcripts. This is ATP-dependent RNA helicase mtr4 (mtr4) from Schizosaccharomyces pombe (strain 972 / ATCC 24843) (Fission yeast).